The following is a 366-amino-acid chain: Beta-1,3-glucan-binding protein (366 aa).

The signal sequence occupies residues 1–17 (MKGFVASVVLLACGALA). Residues 18–364 (ADIVEPEDCT…YVRVWKMEST (347 aa)) form the GH16 domain. Asn66 carries an N-linked (GlcNAc...) asparagine glycan.

Belongs to the glycosyl hydrolase 16 family. As to expression, constitutively expressed in hemocytes.

The protein resides in the secreted. In terms of biological role, binds to beta-1,3-glucan. May play a role in recognition of microorganisms and in activation of the prophenoloxidase cascade. The polypeptide is Beta-1,3-glucan-binding protein (Penaeus monodon (Giant tiger prawn)).